Here is a 130-residue protein sequence, read N- to C-terminus: Large ribosomal subunit protein bL19 (130 aa).

Belongs to the bacterial ribosomal protein bL19 family.

In terms of biological role, this protein is located at the 30S-50S ribosomal subunit interface and may play a role in the structure and function of the aminoacyl-tRNA binding site. The chain is Large ribosomal subunit protein bL19 from Burkholderia orbicola (strain MC0-3).